A 35-amino-acid polypeptide reads, in one-letter code: MLNWQVIVQLVFLALIITTGPVIIVYLSTRERNLL.

The helical transmembrane segment at 6–26 threads the bilayer; that stretch reads VIVQLVFLALIITTGPVIIVY.

It belongs to the Psb30/Ycf12 family. In terms of assembly, PSII is composed of 1 copy each of membrane proteins PsbA, PsbB, PsbC, PsbD, PsbE, PsbF, PsbH, PsbI, PsbJ, PsbK, PsbL, PsbM, PsbT, PsbY, PsbZ, Psb30/Ycf12, peripheral proteins of the oxygen-evolving complex and a large number of cofactors. It forms dimeric complexes.

The protein resides in the plastid. Its subcellular location is the chloroplast thylakoid membrane. Functionally, a core subunit of photosystem II (PSII), probably helps stabilize the reaction center. The sequence is that of Photosystem II reaction center protein Psb30 from Cyanidium caldarium (Red alga).